Reading from the N-terminus, the 495-residue chain is ATP synthase subunit beta, chloroplastic (495 aa).

172–179 contributes to the ATP binding site; the sequence is GGAGVGKT.

This sequence belongs to the ATPase alpha/beta chains family. As to quaternary structure, F-type ATPases have 2 components, CF(1) - the catalytic core - and CF(0) - the membrane proton channel. CF(1) has five subunits: alpha(3), beta(3), gamma(1), delta(1), epsilon(1). CF(0) has four main subunits: a(1), b(1), b'(1) and c(9-12).

Its subcellular location is the plastid. It is found in the chloroplast thylakoid membrane. The catalysed reaction is ATP + H2O + 4 H(+)(in) = ADP + phosphate + 5 H(+)(out). Functionally, produces ATP from ADP in the presence of a proton gradient across the membrane. The catalytic sites are hosted primarily by the beta subunits. This Hyacinthoides non-scripta (English bluebell) protein is ATP synthase subunit beta, chloroplastic.